A 379-amino-acid chain; its full sequence is Chaperone protein DnaJ (379 aa).

Residues 5 to 69 (DYYEVLGISK…NKRASYDQFG (65 aa)) enclose the J domain. Residues 136 to 218 (GTTKEISIRK…CHGKGTENKT (83 aa)) form a CR-type zinc finger. 8 residues coordinate Zn(2+): cysteine 149, cysteine 152, cysteine 166, cysteine 169, cysteine 192, cysteine 195, cysteine 206, and cysteine 209. CXXCXGXG motif repeat units follow at residues 149 to 156 (CETCHGDG), 166 to 173 (CSYCNGAG), 192 to 199 (CPKCNGSG), and 206 to 213 (CPTCHGKG).

The protein belongs to the DnaJ family. In terms of assembly, homodimer. The cofactor is Zn(2+).

It is found in the cytoplasm. In terms of biological role, participates actively in the response to hyperosmotic and heat shock by preventing the aggregation of stress-denatured proteins and by disaggregating proteins, also in an autonomous, DnaK-independent fashion. Unfolded proteins bind initially to DnaJ; upon interaction with the DnaJ-bound protein, DnaK hydrolyzes its bound ATP, resulting in the formation of a stable complex. GrpE releases ADP from DnaK; ATP binding to DnaK triggers the release of the substrate protein, thus completing the reaction cycle. Several rounds of ATP-dependent interactions between DnaJ, DnaK and GrpE are required for fully efficient folding. Also involved, together with DnaK and GrpE, in the DNA replication of plasmids through activation of initiation proteins. The polypeptide is Chaperone protein DnaJ (Staphylococcus aureus (strain USA300 / TCH1516)).